Consider the following 47-residue polypeptide: Small, acid-soluble spore protein K (47 aa).

Positions 1-47 are disordered; it reads MRNKAHGFPHRISFDGEPDRAKHASKRANGTINTKPQERMHQANPDQ. The span at 12–22 shows a compositional bias: basic and acidic residues; the sequence is ISFDGEPDRAK.

Belongs to the SspK family.

The protein resides in the spore core. This Halalkalibacterium halodurans (strain ATCC BAA-125 / DSM 18197 / FERM 7344 / JCM 9153 / C-125) (Bacillus halodurans) protein is Small, acid-soluble spore protein K.